Reading from the N-terminus, the 98-residue chain is Large ribosomal subunit protein eL30 (98 aa).

It belongs to the eukaryotic ribosomal protein eL30 family.

The polypeptide is Large ribosomal subunit protein eL30 (Methanosphaera stadtmanae (strain ATCC 43021 / DSM 3091 / JCM 11832 / MCB-3)).